We begin with the raw amino-acid sequence, 689 residues long: Glycine--tRNA ligase beta subunit (689 aa).

It belongs to the class-II aminoacyl-tRNA synthetase family. In terms of assembly, tetramer of two alpha and two beta subunits.

It is found in the cytoplasm. It carries out the reaction tRNA(Gly) + glycine + ATP = glycyl-tRNA(Gly) + AMP + diphosphate. The chain is Glycine--tRNA ligase beta subunit from Escherichia coli O17:K52:H18 (strain UMN026 / ExPEC).